Here is a 473-residue protein sequence, read N- to C-terminus: Venom prothrombin activator vestarin-D1 (473 aa).

A signal peptide spans methionine 1 to alanine 20. Residues glutamate 21 to arginine 40 constitute a propeptide that is removed on maturation. Residues alanine 41 to aspartate 86 enclose the Gla domain. 4-carboxyglutamate occurs at positions 46, 47, 54, 56, 59, 60, 65, 66, 69, 72, and 75. An intrachain disulfide couples cysteine 57 to cysteine 62. Positions aspartate 86 to glutamate 122 constitute an EGF-like 1; calcium-binding domain. Cystine bridges form between cysteine 90/cysteine 101, cysteine 95/cysteine 110, cysteine 112/cysteine 121, cysteine 129/cysteine 140, cysteine 136/cysteine 149, cysteine 151/cysteine 164, cysteine 172/cysteine 335, cysteine 235/cysteine 240, cysteine 383/cysteine 397, and cysteine 408/cysteine 436. O-linked (Hex...) serine glycosylation occurs at serine 92. The region spanning cysteine 129–cysteine 164 is the EGF-like 2 domain. Residues arginine 182–arginine 228 constitute a propeptide, activation peptide. Residues isoleucine 229 to arginine 460 enclose the Peptidase S1 domain. The Charge relay system role is filled by histidine 270. N-linked (GlcNAc...) asparagine glycosylation is present at asparagine 273. Aspartate 315 acts as the Charge relay system in catalysis. Catalysis depends on serine 412, which acts as the Charge relay system.

This sequence belongs to the peptidase S1 family. Snake venom subfamily. Heterodimer of a light chain and a heavy chain; disulfide-linked. In terms of processing, the vitamin K-dependent, enzymatic carboxylation of some glutamate residues allows the modified protein to bind calcium. In terms of tissue distribution, expressed by the venom gland.

It localises to the secreted. It catalyses the reaction Selective cleavage of Arg-|-Thr and then Arg-|-Ile bonds in prothrombin to form thrombin.. In terms of biological role, snake prothrombin activator that attacks the hemostatic system of prey. This protein is functionally similar to blood coagulation factor Xa. This Demansia vestigiata (Lesser black whip snake) protein is Venom prothrombin activator vestarin-D1.